The following is a 494-amino-acid chain: MDDFSRDTENFVCWLKTTAEIEVSPKIEIKDLCCDNQGRAVVATQKIKKDETLFKIPRSSVLSVTTSQLIKDYPSLKDKFLNETGSWEGLIICILYEMEVLQERSRWAPYFKVWNKPSDMNALIFWDDNELQLLKPSLVLERIGKKEAKEMHERIIKSIKQIGGEFSRVATSFEFDNFAYIASIILSYSFDLEMQDSSVNENEEEETSEEELENERYLKSMIPLADMLNADTSKCNANLTYDSNCLKMVALRDIEKNEQVYNIYGEHPNSELLRRYGYVEWDGSKYDFGEVLLENIVEALKETFETNTEFLDRCIDILRNNANIQEFLEGEEIVLDSYDCYNNGELLPQLILLVQILTILCQIPGLCKLDIKAMERQVERIVKKCLQLIEGARATTNCSATWKRCIMKRLADYPIKKCVSIEKPSKGNSLTREELRDVMARRVLKSEIDSLQVCEETIDKNYKVIPDEKLLTNILKRKLTEEEKSSVKRPCVKK.

Residues 25–265 form the SET domain; that stretch reads PKIEIKDLCC…KNEQVYNIYG (241 aa). Y264 provides a ligand contact to S-adenosyl-L-methionine.

Belongs to the class V-like SAM-binding methyltransferase superfamily. Histone-lysine methyltransferase family. SETD6 subfamily.

The protein resides in the nucleus. Functionally, S-adenosyl-L-methionine-dependent protein-lysine N-methyltransferase that monomethylates 60S ribosomal protein L42 (RPL42A and RPL42B) at 'Lys-55'. The sequence is that of Ribosomal lysine N-methyltransferase 4 from Saccharomyces cerevisiae (strain ATCC 204508 / S288c) (Baker's yeast).